Consider the following 351-residue polypeptide: Histidinol-phosphate aminotransferase (351 aa).

Lysine 214 is modified (N6-(pyridoxal phosphate)lysine).

The protein belongs to the class-II pyridoxal-phosphate-dependent aminotransferase family. Histidinol-phosphate aminotransferase subfamily. It depends on pyridoxal 5'-phosphate as a cofactor.

The enzyme catalyses L-histidinol phosphate + 2-oxoglutarate = 3-(imidazol-4-yl)-2-oxopropyl phosphate + L-glutamate. Its pathway is amino-acid biosynthesis; L-histidine biosynthesis; L-histidine from 5-phospho-alpha-D-ribose 1-diphosphate: step 7/9. This chain is Histidinol-phosphate aminotransferase, found in Methanosphaerula palustris (strain ATCC BAA-1556 / DSM 19958 / E1-9c).